Reading from the N-terminus, the 339-residue chain is Phosphatidylglycerol--prolipoprotein diacylglyceryl transferase (339 aa).

3 helical membrane passes run 43-63 (FTIA…YWLG), 81-101 (ILWM…LTSW), and 121-141 (NGGI…IYFA). Arginine 167 provides a ligand contact to a 1,2-diacyl-sn-glycero-3-phospho-(1'-sn-glycerol). A run of 2 helical transmembrane segments spans residues 231-251 (FTQL…YFWL) and 300-320 (LWTD…WMLW).

The protein belongs to the Lgt family.

It localises to the cell membrane. It catalyses the reaction L-cysteinyl-[prolipoprotein] + a 1,2-diacyl-sn-glycero-3-phospho-(1'-sn-glycerol) = an S-1,2-diacyl-sn-glyceryl-L-cysteinyl-[prolipoprotein] + sn-glycerol 1-phosphate + H(+). It participates in protein modification; lipoprotein biosynthesis (diacylglyceryl transfer). In terms of biological role, catalyzes the transfer of the diacylglyceryl group from phosphatidylglycerol to the sulfhydryl group of the N-terminal cysteine of a prolipoprotein, the first step in the formation of mature lipoproteins. The protein is Phosphatidylglycerol--prolipoprotein diacylglyceryl transferase of Deinococcus radiodurans (strain ATCC 13939 / DSM 20539 / JCM 16871 / CCUG 27074 / LMG 4051 / NBRC 15346 / NCIMB 9279 / VKM B-1422 / R1).